The following is a 93-amino-acid chain: uncharacterized protein (93 aa).

The region spanning 1–76 (MDSHTTEKRR…IQTIEPDESM (76 aa)) is the Sm domain.

In terms of assembly, part of the core SMN complex at least composed of smn1, yip11/gem2, gem6, gem7 and gem8. Interacts with gem7; the interaction is direct.

In terms of biological role, the SMN complex catalyzes the assembly of small nuclear ribonucleoproteins (snRNPs), the building blocks of the spliceosome, and thereby plays an important role in the splicing of cellular pre-mRNAs. Most spliceosomal snRNPs contain a common set of Sm proteins smb1, smd1, smd2, smd3, sme1, smf1 and smg1 that assemble in a heptameric protein ring on the Sm site of the small nuclear RNA to form the core snRNP (Sm core). In the cytosol, the Sm proteins smd1, smd2, sme1, smf1 and smg1 (5Sm) are trapped in an inactive 6S pICln-Sm complex by the chaperone saf5. To complete assembly of core snRNPs, the SMN complex accepts 5Sm from saf5. Binding of snRNA inside 5Sm triggers eviction of the SMN complex, thereby allowing binding of smd3 and smb1 to complete assembly of the core snRNP. This is an uncharacterized protein from Schizosaccharomyces pombe (strain 972 / ATCC 24843) (Fission yeast).